We begin with the raw amino-acid sequence, 458 residues long: NADH-quinone oxidoreductase subunit N 1 (458 aa).

The next 14 helical transmembrane spans lie at 12-32, 37-57, 70-90, 101-121, 124-144, 159-179, 199-219, 230-250, 266-286, 293-313, 321-341, 361-381, 393-413, and 438-458; these read ALIP…AGLL, EVLV…IPSF, FLTI…LLVL, FNES…LVSA, LISF…LVGI, FMLG…IYGA, ILIG…LVPF, APTP…LGAF, SNFL…FALI, MLAY…IVGT, VAYM…VIAF, IAML…GFIV, GFTW…YYYL, and VAIL…LFLI.

The protein belongs to the complex I subunit 2 family. As to quaternary structure, NDH-1 is composed of 14 different subunits. Subunits NuoA, H, J, K, L, M, N constitute the membrane sector of the complex.

The protein resides in the cell inner membrane. It catalyses the reaction a quinone + NADH + 5 H(+)(in) = a quinol + NAD(+) + 4 H(+)(out). Its function is as follows. NDH-1 shuttles electrons from NADH, via FMN and iron-sulfur (Fe-S) centers, to quinones in the respiratory chain. The immediate electron acceptor for the enzyme in this species is believed to be ubiquinone. Couples the redox reaction to proton translocation (for every two electrons transferred, four hydrogen ions are translocated across the cytoplasmic membrane), and thus conserves the redox energy in a proton gradient. The sequence is that of NADH-quinone oxidoreductase subunit N 1 from Thermodesulfovibrio yellowstonii (strain ATCC 51303 / DSM 11347 / YP87).